The sequence spans 297 residues: 33 kDa chaperonin (297 aa).

Disulfide bonds link C233–C235 and C267–C270.

It belongs to the HSP33 family. Post-translationally, under oxidizing conditions two disulfide bonds are formed involving the reactive cysteines. Under reducing conditions zinc is bound to the reactive cysteines and the protein is inactive.

Its subcellular location is the cytoplasm. Redox regulated molecular chaperone. Protects both thermally unfolding and oxidatively damaged proteins from irreversible aggregation. Plays an important role in the bacterial defense system toward oxidative stress. This is 33 kDa chaperonin from Haemophilus ducreyi (strain 35000HP / ATCC 700724).